We begin with the raw amino-acid sequence, 240 residues long: tRNA (guanine-N(7)-)-methyltransferase (240 aa).

The interval 1–20 (MTESHDTPITSDGEARPHRR) is disordered. S-adenosyl-L-methionine-binding residues include Glu-70, Glu-95, Asp-122, and Asp-145. Asp-145 is a catalytic residue. Substrate-binding positions include Lys-149, Asp-181, and 218–221 (TKFE).

The protein belongs to the class I-like SAM-binding methyltransferase superfamily. TrmB family.

The enzyme catalyses guanosine(46) in tRNA + S-adenosyl-L-methionine = N(7)-methylguanosine(46) in tRNA + S-adenosyl-L-homocysteine. It participates in tRNA modification; N(7)-methylguanine-tRNA biosynthesis. Its function is as follows. Catalyzes the formation of N(7)-methylguanine at position 46 (m7G46) in tRNA. This is tRNA (guanine-N(7)-)-methyltransferase from Pseudomonas putida (strain ATCC 700007 / DSM 6899 / JCM 31910 / BCRC 17059 / LMG 24140 / F1).